Reading from the N-terminus, the 331-residue chain is Adenosine deaminase (331 aa).

Zn(2+) contacts are provided by H12 and H14. 3 residues coordinate substrate: H14, D16, and G170. H197 is a Zn(2+) binding site. Residue E200 is the Proton donor of the active site. Residue D278 coordinates Zn(2+). D279 lines the substrate pocket.

This sequence belongs to the metallo-dependent hydrolases superfamily. Adenosine and AMP deaminases family. Adenosine deaminase subfamily. Zn(2+) is required as a cofactor.

The enzyme catalyses adenosine + H2O + H(+) = inosine + NH4(+). The catalysed reaction is 2'-deoxyadenosine + H2O + H(+) = 2'-deoxyinosine + NH4(+). Catalyzes the hydrolytic deamination of adenosine and 2-deoxyadenosine. The chain is Adenosine deaminase from Shewanella sp. (strain MR-4).